The primary structure comprises 137 residues: Global transcriptional regulator Spx (137 aa).

A disulfide bridge links Cys-10 with Cys-13.

The protein belongs to the ArsC family. Spx subfamily. In terms of assembly, interacts with the C-terminal domain of the alpha subunit of the RNAP.

The protein resides in the cytoplasm. Global transcriptional regulator that plays a key role in stress response and exerts either positive or negative regulation of genes. Acts by interacting with the C-terminal domain of the alpha subunit of the RNA polymerase (RNAP). This interaction can enhance binding of RNAP to the promoter region of target genes and stimulate their transcription, or block interaction of RNAP with activator. This Streptococcus agalactiae serotype III (strain NEM316) protein is Global transcriptional regulator Spx.